The chain runs to 515 residues: Histidine ammonia-lyase (515 aa).

The 5-imidazolinone (Ala-Gly) cross-link spans 142–144 (ASG). The residue at position 143 (S143) is a 2,3-didehydroalanine (Ser).

The protein belongs to the PAL/histidase family. In terms of processing, contains an active site 4-methylidene-imidazol-5-one (MIO), which is formed autocatalytically by cyclization and dehydration of residues Ala-Ser-Gly.

The protein resides in the cytoplasm. It catalyses the reaction L-histidine = trans-urocanate + NH4(+). The protein operates within amino-acid degradation; L-histidine degradation into L-glutamate; N-formimidoyl-L-glutamate from L-histidine: step 1/3. The protein is Histidine ammonia-lyase of Bradyrhizobium sp. (strain BTAi1 / ATCC BAA-1182).